We begin with the raw amino-acid sequence, 343 residues long: N-acetyl-gamma-glutamyl-phosphate reductase (343 aa).

C149 is an active-site residue.

It belongs to the NAGSA dehydrogenase family. Type 1 subfamily.

It localises to the cytoplasm. It catalyses the reaction N-acetyl-L-glutamate 5-semialdehyde + phosphate + NADP(+) = N-acetyl-L-glutamyl 5-phosphate + NADPH + H(+). The protein operates within amino-acid biosynthesis; L-arginine biosynthesis; N(2)-acetyl-L-ornithine from L-glutamate: step 3/4. Catalyzes the NADPH-dependent reduction of N-acetyl-5-glutamyl phosphate to yield N-acetyl-L-glutamate 5-semialdehyde. This is N-acetyl-gamma-glutamyl-phosphate reductase from Exiguobacterium sibiricum (strain DSM 17290 / CCUG 55495 / CIP 109462 / JCM 13490 / 255-15).